The chain runs to 449 residues: Tryptophan--tRNA ligase (449 aa).

Residues 10–12 (TTT) and 18–19 (GN) contribute to the ATP site. The 'HIGH' region signature appears at 11–19 (TTGTPHLGN). D143 provides a ligand contact to L-tryptophan. ATP-binding positions include 155 to 157 (GRD), L197, and 204 to 208 (KMSKS). The 'KMSKS' region motif lies at 204 to 208 (KMSKS).

It belongs to the class-I aminoacyl-tRNA synthetase family. Homodimer.

The protein resides in the cytoplasm. The catalysed reaction is tRNA(Trp) + L-tryptophan + ATP = L-tryptophyl-tRNA(Trp) + AMP + diphosphate + H(+). In terms of biological role, catalyzes the attachment of tryptophan to tRNA(Trp). This is Tryptophan--tRNA ligase from Pseudomonas syringae pv. tomato (strain ATCC BAA-871 / DC3000).